The chain runs to 391 residues: MRASSPRGFRVHHGHAGIRGSHADLAVIASDVPAAVGAVFTRSRFAAPSVLLSRDAVADGIARGVVVLSGNANAGTGPRGYEDAAEVRHLVAGIVDCDERDVLIASTGPVGERYPMSRVRAHLRAVRGPLPGADFDGAAAAVLGTAGARPTIRRARCGDATLIGVAKGPGTGPAEQDDRSTLAFFCTDAQVSPVVLDDIFRRVADRAFHGLGFGADASTGDTAAVLANGLAGRVDLVAFEQVLGALALDLVRDVVRDSGCGGALVTVRVTGAHDTEQAGRVGRAVVDAPSLRAAVHGPAPDWAPVAAVAGGHGDEGPGRSPGRITIRVGGREVFPAPRDRARPDAVTAYPHGGEVTVHIDLGVPGRAPGAFTVHGCDLLAGYPRLGAGRAV.

Substrate is bound by residues Lys167 and Ser180. Residue Ser180 is the Nucleophile of the active site.

It belongs to the ArgJ family. Heterotetramer of two alpha and two beta chains.

The protein localises to the cytoplasm. It catalyses the reaction N(2)-acetyl-L-ornithine + L-glutamate = N-acetyl-L-glutamate + L-ornithine. The enzyme catalyses L-glutamate + acetyl-CoA = N-acetyl-L-glutamate + CoA + H(+). The protein operates within amino-acid biosynthesis; L-arginine biosynthesis; L-ornithine and N-acetyl-L-glutamate from L-glutamate and N(2)-acetyl-L-ornithine (cyclic): step 1/1. It participates in amino-acid biosynthesis; L-arginine biosynthesis; N(2)-acetyl-L-ornithine from L-glutamate: step 1/4. Its function is as follows. Catalyzes two activities which are involved in the cyclic version of arginine biosynthesis: the synthesis of N-acetylglutamate from glutamate and acetyl-CoA as the acetyl donor, and of ornithine by transacetylation between N(2)-acetylornithine and glutamate. The sequence is that of Arginine biosynthesis bifunctional protein ArgJ 2 from Streptomyces clavuligerus.